The chain runs to 140 residues: Profilin-1 (140 aa).

At A2 the chain carries N-acetylalanine. At S28 the chain carries Phosphoserine. A Glycyl lysine isopeptide (Lys-Gly) (interchain with G-Cter in SUMO2); alternate cross-link involves residue K54. A Glycyl lysine isopeptide (Lys-Gly) (interchain with G-Cter in ubiquitin); alternate cross-link involves residue K54. S57 is modified (phosphoserine). N6-acetyllysine is present on K108. Y129 carries the phosphotyrosine modification. S138 carries the post-translational modification Phosphoserine; by ROCK1.

Belongs to the profilin family. As to quaternary structure, found in a complex with XPO6, Ran, ACTB and PFN1. Interacts with ACTB. Interacts with VASP. Interacts with HTT. Interacts with SH3BGRL. Occurs in many kinds of cells as a complex with monomeric actin in a 1:1 ratio. Interacts with ACTMAP. Phosphorylation at Ser-138 reduces its affinity for G-actin and blocks its interaction with HTT, reducing its ability to inhibit androgen receptor (AR) and HTT aggregation.

It is found in the cytoplasm. It localises to the cytoskeleton. Functionally, binds to actin and affects the structure of the cytoskeleton. At high concentrations, profilin prevents the polymerization of actin, whereas it enhances it at low concentrations. By binding to PIP2, it inhibits the formation of IP3 and DG. Inhibits androgen receptor (AR) and HTT aggregation and binding of G-actin is essential for its inhibition of AR. This chain is Profilin-1 (PFN1), found in Bos taurus (Bovine).